The following is a 298-amino-acid chain: GTPase Era (298 aa).

The 168-residue stretch at 3–170 (KSGFVAILGR…IKLLTDNLEE (168 aa)) folds into the Era-type G domain. Residues 11 to 18 (GRPNVGKS) form a G1 region. 11 to 18 (GRPNVGKS) serves as a coordination point for GTP. The G2 stretch occupies residues 37–41 (QTTRN). A G3 region spans residues 58-61 (DTPG). GTP contacts are provided by residues 58 to 62 (DTPGI) and 120 to 123 (NKID). Residues 120–123 (NKID) form a G4 region. A G5 region spans residues 149 to 151 (ISA). The 79-residue stretch at 201–279 (TQQEVPHSVA…YLETWVKVKK (79 aa)) folds into the KH type-2 domain.

It belongs to the TRAFAC class TrmE-Era-EngA-EngB-Septin-like GTPase superfamily. Era GTPase family. In terms of assembly, monomer.

The protein resides in the cytoplasm. The protein localises to the cell membrane. Functionally, an essential GTPase that binds both GDP and GTP, with rapid nucleotide exchange. Plays a role in 16S rRNA processing and 30S ribosomal subunit biogenesis and possibly also in cell cycle regulation and energy metabolism. The protein is GTPase Era of Streptococcus pyogenes serotype M4 (strain MGAS10750).